Consider the following 923-residue polypeptide: Ubiquitin carboxyl-terminal hydrolase 10 (923 aa).

The 116-residue stretch at 19 to 134 folds into the DUSP domain; sequence FTPEEEKRIV…GGPPIERKLI (116 aa). The interval 65-91 is disordered; it reads NECSTGESSEAPRPGPIDNHDIIESDS. The region spanning 304-895 is the USP domain; sequence AGLSNLGNTC…AAYVLFYRRV (592 aa). The active-site Nucleophile is Cys313. Residue His853 is the Proton acceptor of the active site.

Belongs to the peptidase C19 family.

The enzyme catalyses Thiol-dependent hydrolysis of ester, thioester, amide, peptide and isopeptide bonds formed by the C-terminal Gly of ubiquitin (a 76-residue protein attached to proteins as an intracellular targeting signal).. Recognizes and hydrolyzes the peptide bond at the C-terminal Gly of ubiquitin. Involved in the processing of poly-ubiquitin precursors as well as that of ubiquitinated proteins. This chain is Ubiquitin carboxyl-terminal hydrolase 10 (UBP10), found in Arabidopsis thaliana (Mouse-ear cress).